A 143-amino-acid chain; its full sequence is uncharacterized protein (143 aa).

The N-terminal stretch at 1 to 32 is a signal peptide; the sequence is MITNLRRRTAMAAAGLGAALGLGILLVPTVDA.

It to M.tuberculosis Rv1269c.

This is an uncharacterized protein from Mycobacterium tuberculosis (strain CDC 1551 / Oshkosh).